The chain runs to 403 residues: Aminomethyltransferase, mitochondrial (403 aa).

The transit peptide at 1 to 28 directs the protein to the mitochondrion; sequence MQRAMTVVPHLGLRLQALPLALGRPLSR. Substrate is bound by residues Glu232, Arg261, and Tyr399.

Belongs to the GcvT family. In terms of assembly, the glycine cleavage system is composed of four proteins: P, T, L and H.

It is found in the mitochondrion. The enzyme catalyses N(6)-[(R)-S(8)-aminomethyldihydrolipoyl]-L-lysyl-[protein] + (6S)-5,6,7,8-tetrahydrofolate = N(6)-[(R)-dihydrolipoyl]-L-lysyl-[protein] + (6R)-5,10-methylene-5,6,7,8-tetrahydrofolate + NH4(+). Its function is as follows. The glycine cleavage system catalyzes the degradation of glycine. The protein is Aminomethyltransferase, mitochondrial of Canis lupus familiaris (Dog).